The primary structure comprises 358 residues: Aromatic amino acid aminotransferase (358 aa).

K214 carries the N6-(pyridoxal phosphate)lysine modification.

It belongs to the class-II pyridoxal-phosphate-dependent aminotransferase family. As to quaternary structure, homodimer. The cofactor is pyridoxal 5'-phosphate.

The enzyme catalyses an aromatic L-alpha-amino acid + 2-oxoglutarate = an aromatic oxo-acid + L-glutamate. In terms of biological role, aminotransferase that catalyzes the conversion of aromatic amino acids and 2-oxoglutarate into corresponding aromatic oxo acids and L-glutamate. This Rhodococcus opacus (strain B4) protein is Aromatic amino acid aminotransferase.